A 236-amino-acid chain; its full sequence is Diaminopimelate epimerase (236 aa).

Substrate-binding residues include Asn-8 and Asn-55. Cys-64 (proton donor) is an active-site residue. Substrate-binding positions include 65-66 (GN), Asn-159, and 176-177 (ER). Cys-186 acts as the Proton acceptor in catalysis. 187-188 (GT) serves as a coordination point for substrate.

This sequence belongs to the diaminopimelate epimerase family. In terms of assembly, probably forms homotrimers.

The protein localises to the cytoplasm. It carries out the reaction (2S,6S)-2,6-diaminopimelate = meso-2,6-diaminopimelate. It participates in amino-acid biosynthesis; L-lysine biosynthesis via DAP pathway; DL-2,6-diaminopimelate from LL-2,6-diaminopimelate: step 1/1. Functionally, catalyzes the stereoinversion of LL-2,6-diaminopimelate (L,L-DAP) to meso-diaminopimelate (meso-DAP), a precursor of L-lysine and an essential component of the bacterial peptidoglycan. Also catalyzes the racemization of certain amino acids, including Lys, with low efficiency. In Thermotoga maritima (strain ATCC 43589 / DSM 3109 / JCM 10099 / NBRC 100826 / MSB8), this protein is Diaminopimelate epimerase.